We begin with the raw amino-acid sequence, 121 residues long: uncharacterized protein (121 aa).

This sequence to M.jannaschii MJ0017 and MJ1466.

This is an uncharacterized protein from Aquifex aeolicus (strain VF5).